Reading from the N-terminus, the 232-residue chain is Imidazoleglycerol-phosphate dehydratase (232 aa).

This sequence belongs to the imidazoleglycerol-phosphate dehydratase family.

The enzyme catalyses D-erythro-1-(imidazol-4-yl)glycerol 3-phosphate = 3-(imidazol-4-yl)-2-oxopropyl phosphate + H2O. It functions in the pathway amino-acid biosynthesis; L-histidine biosynthesis; L-histidine from 5-phospho-alpha-D-ribose 1-diphosphate: step 6/9. The sequence is that of Imidazoleglycerol-phosphate dehydratase (HIS3) from Lachancea kluyveri (strain ATCC 58438 / CBS 3082 / BCRC 21498 / NBRC 1685 / JCM 7257 / NCYC 543 / NRRL Y-12651) (Yeast).